The sequence spans 102 residues: MQMVQLQIRVKMIWLLFMNHNHNHNHNQNHNHSHNLNPKKKHHRRGQRSAHRMYGSISPRRKLKWRSMERNTFRYGDIATFLIARLSIGLRVIMEQADFEIT.

Residues 24 to 51 (HNHNQNHNHSHNLNPKKKHHRRGQRSAH) show a composition bias toward basic residues. Residues 24–55 (HNHNQNHNHSHNLNPKKKHHRRGQRSAHRMYG) are disordered.

In Zea mays (Maize), this protein is Transposable element activator uncharacterized 12 kDa protein.